A 399-amino-acid polypeptide reads, in one-letter code: uncharacterized protein (399 aa).

Residues M1–R8 are Cytoplasmic-facing. Residues H9–L35 traverse the membrane as a helical segment. At T36–S42 the chain is on the extracellular side. The chain crosses the membrane as a helical span at residues G43 to T71. Topologically, residues Q72–K75 are cytoplasmic. A helical transmembrane segment spans residues G76–F101. The Extracellular segment spans residues I102–A105. Residues A106–S123 form a helical membrane-spanning segment. Over L124–Y134 the chain is Cytoplasmic. Residues G135–N157 form a helical membrane-spanning segment. The Extracellular segment spans residues Q158–Y160. A helical transmembrane segment spans residues P161–A180. The Cytoplasmic portion of the chain corresponds to S181–F210. A helical transmembrane segment spans residues M211 to L230. Residues F231–K234 are Extracellular-facing. A helical transmembrane segment spans residues S235 to F259. Residues A260–L269 are Cytoplasmic-facing. The chain crosses the membrane as a helical span at residues L270–T289. Residues A290–S292 lie on the Extracellular side of the membrane. Residues L293 to L315 form a helical membrane-spanning segment. The Cytoplasmic segment spans residues Q316–E327. Residues A328–D355 form a helical membrane-spanning segment. Residues Y356–S358 lie on the Extracellular side of the membrane. A helical membrane pass occupies residues I359–Y379. At L380–P399 the chain is on the cytoplasmic side.

It belongs to the major facilitator superfamily.

The protein localises to the cell membrane. This is an uncharacterized protein from Bacillus subtilis (strain 168).